A 368-amino-acid chain; its full sequence is Isopentenyl-diphosphate delta-isomerase (368 aa).

7–8 serves as a coordination point for substrate; sequence RK. FMN is bound by residues Thr65, 66–68, Ser96, and Asn125; that span reads GMT. 96–98 provides a ligand contact to substrate; that stretch reads SQR. Gln160 lines the substrate pocket. A Mg(2+)-binding site is contributed by Glu161. FMN contacts are provided by residues Lys193, Ser218, Thr223, 275–277, and 296–297; these read GIR and AL.

The protein belongs to the IPP isomerase type 2 family. As to quaternary structure, homooctamer. Dimer of tetramers. The cofactor is FMN. Requires NADPH as cofactor. Mg(2+) is required as a cofactor.

The protein localises to the cytoplasm. The enzyme catalyses isopentenyl diphosphate = dimethylallyl diphosphate. Involved in the biosynthesis of isoprenoids. Catalyzes the 1,3-allylic rearrangement of the homoallylic substrate isopentenyl (IPP) to its allylic isomer, dimethylallyl diphosphate (DMAPP). In Saccharolobus islandicus (strain L.S.2.15 / Lassen #1) (Sulfolobus islandicus), this protein is Isopentenyl-diphosphate delta-isomerase.